A 135-amino-acid polypeptide reads, in one-letter code: MAGSARSAMAAKALQTILNIGLLALATILVIFLVKETFHLAKVLLISSEKDSSYQLIEGIVIYFLYFEFIALIVKYFQSGYHFPLRYFIYIGITAIIRLIIVDHKSPSDTLVYSAAILLLVVTLYLANSNRLKRE.

The next 4 helical transmembrane spans lie at 14–34, 54–74, 82–102, and 107–127; these read LQTI…IFLV, YQLI…ALIV, HFPL…LIIV, and PSDT…LYLA.

The protein belongs to the PsiE family.

The protein localises to the cell inner membrane. This chain is Protein PsiE homolog, found in Pectobacterium atrosepticum (strain SCRI 1043 / ATCC BAA-672) (Erwinia carotovora subsp. atroseptica).